We begin with the raw amino-acid sequence, 83 residues long: Large ribosomal subunit protein bL31B (83 aa).

The protein belongs to the bacterial ribosomal protein bL31 family. Type B subfamily. In terms of assembly, part of the 50S ribosomal subunit.

The polypeptide is Large ribosomal subunit protein bL31B (Lactobacillus johnsonii (strain CNCM I-12250 / La1 / NCC 533)).